A 201-amino-acid chain; its full sequence is Prostamide/prostaglandin F synthase (201 aa).

Phosphotyrosine is present on Y108.

It belongs to the peroxiredoxin-like PRXL2 family. Prostamide/prostaglandin F synthase subfamily.

The protein resides in the cytoplasm. It localises to the cytosol. It carries out the reaction prostaglandin H2 + [thioredoxin]-dithiol = prostaglandin F2alpha + [thioredoxin]-disulfide. It catalyses the reaction prostamide F2alpha + [thioredoxin]-disulfide = prostamide H2 + [thioredoxin]-dithiol. Functionally, catalyzes the reduction of prostaglandin-ethanolamide H(2) (prostamide H(2)) to prostamide F(2alpha) with NADPH as proton donor. Also able to reduce prostaglandin H(2) to prostaglandin F(2alpha). This Bos taurus (Bovine) protein is Prostamide/prostaglandin F synthase (PRXL2B).